We begin with the raw amino-acid sequence, 380 residues long: Chaperone protein DnaJ (380 aa).

Positions 6 to 71 (DYYAILEVSR…QKRAAYDQYG (66 aa)) constitute a J domain. Residues 136–215 (GVKKDVRVIT…CHGEGTVEKE (80 aa)) form a CR-type zinc finger. The Zn(2+) site is built by Cys149, Cys152, Cys167, Cys170, Cys189, Cys192, Cys203, and Cys206. CXXCXGXG motif repeat units follow at residues 149–156 (CEACHGTG), 167–174 (CPSCHGAG), 189–196 (CPTCHGAG), and 203–210 (CKVCHGEG).

Belongs to the DnaJ family. In terms of assembly, homodimer. Zn(2+) serves as cofactor.

The protein resides in the cytoplasm. In terms of biological role, participates actively in the response to hyperosmotic and heat shock by preventing the aggregation of stress-denatured proteins and by disaggregating proteins, also in an autonomous, DnaK-independent fashion. Unfolded proteins bind initially to DnaJ; upon interaction with the DnaJ-bound protein, DnaK hydrolyzes its bound ATP, resulting in the formation of a stable complex. GrpE releases ADP from DnaK; ATP binding to DnaK triggers the release of the substrate protein, thus completing the reaction cycle. Several rounds of ATP-dependent interactions between DnaJ, DnaK and GrpE are required for fully efficient folding. Also involved, together with DnaK and GrpE, in the DNA replication of plasmids through activation of initiation proteins. The polypeptide is Chaperone protein DnaJ (Acetobacter pasteurianus (strain NBRC 105184 / IFO 3283-01)).